A 351-amino-acid polypeptide reads, in one-letter code: Actin maturation protease (351 aa).

Positions 1–19 are enriched in pro residues; that stretch reads MTSPCSPPLKPPISPPKTP. The segment at 1-70 is disordered; that stretch reads MTSPCSPPLK…PPAATGPAPR (70 aa). Residues 36 to 50 show a composition bias toward low complexity; that stretch reads LDFSALPSPPWSQQT. The span at 51–64 shows a compositional bias: pro residues; sequence PVPPPLPLPPPPAA. Residues 124–244 form a peptidase C39-like region; it reads SLIQEGPQCG…WAVSAGVLLG (121 aa). Cys-132 is a catalytic residue. The residue at position 316 (Ser-316) is a Phosphoserine.

This sequence belongs to the ACTMAP family. Interacts (via N-terminus) with PFN2 isoforms IIa and IIb; the interactions may facilitate efficient cleavage of the acetylated N-terminus of immature actin. Interacts with PFN1.

Its subcellular location is the cytoplasm. The catalysed reaction is N-terminal N(alpha)-acetyl-L-methionyl-L-aspartyl-[protein] + H2O = N-terminal L-aspartyl-[protein] + N-acetyl-L-methionine. It catalyses the reaction N-terminal N(alpha)-acetyl-L-methionyl-L-glutamyl-[protein] + H2O = N-terminal L-glutamyl-[protein] + N-acetyl-L-methionine. It carries out the reaction N-terminal N(alpha)-acetyl-L-cysteinyl-L-aspartyl-[protein] + H2O = N-terminal L-aspartyl-[protein] + N-acetyl-L-cysteine. The enzyme catalyses N-terminal N(alpha)-acetyl-L-cysteinyl-L-glutamyl-[protein] + H2O = N-terminal L-glutamyl-[protein] + N-acetyl-L-cysteine. Actin maturation protease that specifically mediates the cleavage of immature acetylated N-terminal actin, thereby contributing to actin maturation. Cleaves N-terminal acetylated methionine of immature cytoplasmic beta- and gamma-actins ACTB and ACTG1 after translation. Cleaves N-terminal acetylated cysteine of muscle alpha-actins ACTA1, ACTC1 and ACTA2 after canonical removal of N-terminal methionine. The polypeptide is Actin maturation protease (Homo sapiens (Human)).